A 33-amino-acid chain; its full sequence is CTPSGTICSPEAPEQCCSNSCVPHQWLRIFVCA.

Intrachain disulfides connect Cys-1-Cys-17, Cys-8-Cys-21, and Cys-16-Cys-32.

In terms of tissue distribution, expressed in leaves and fruit flesh (at protein level).

Functionally, inhibits trypsin (IC(50)=471 nM). The polypeptide is Trypsin inhibitor 1 (Beta vulgaris subsp. vulgaris (Beet)).